Consider the following 488-residue polypeptide: Multidrug resistance outer membrane protein MdtP (488 aa).

The first 23 residues, 1 to 23, serve as a signal peptide directing secretion; sequence MINRQLSRLLLCSILGSTTLISG. The N-palmitoyl cysteine moiety is linked to residue C24. C24 carries S-diacylglycerol cysteine lipidation.

The protein belongs to the outer membrane factor (OMF) (TC 1.B.17) family. In terms of assembly, could be part of a tripartite efflux system composed of MdtN, MdtO and MdtP.

Its subcellular location is the cell outer membrane. Could be involved in resistance to puromycin, acriflavine and tetraphenylarsonium chloride. The chain is Multidrug resistance outer membrane protein MdtP (mdtP) from Shigella flexneri.